Consider the following 293-residue polypeptide: Undecaprenyl-diphosphatase (293 aa).

The next 8 helical transmembrane spans lie at 3–23 (IALA…EFLP), 43–63 (KGKI…CWEF), 85–105 (ANVV…GKWI), 109–129 (LFNP…ILLA), 178–198 (FALV…MLFG), 203–223 (VATE…TVYE), 238–258 (IFAV…RWLL), and 269–289 (FAWY…SGLV).

Belongs to the UppP family.

It is found in the cell inner membrane. It catalyses the reaction di-trans,octa-cis-undecaprenyl diphosphate + H2O = di-trans,octa-cis-undecaprenyl phosphate + phosphate + H(+). Catalyzes the dephosphorylation of undecaprenyl diphosphate (UPP). Confers resistance to bacitracin. The chain is Undecaprenyl-diphosphatase from Cupriavidus necator (strain ATCC 17699 / DSM 428 / KCTC 22496 / NCIMB 10442 / H16 / Stanier 337) (Ralstonia eutropha).